We begin with the raw amino-acid sequence, 264 residues long: Secretory carrier-associated membrane protein 4 (264 aa).

Residues 1–33 (MNRHHDPNPFDEDEEIVNPFSKGGGRVPAASRP) form a disordered region. At 1–122 (MNRHHDPNPF…AQKLQYLAFA (122 aa)) the chain is on the cytoplasmic side. A coiled-coil region spans residues 51 to 85 (MNDSSQKQRKLADWEAELRKKEMDIKRREEAIAKF). The next 4 helical transmembrane spans lie at 123-143 (SWLG…VCWI), 150-170 (IFFL…VLWY), 185-205 (FGWF…AAIA), and 233-253 (IFYF…LWVL). Topologically, residues 254–264 (QKIYLYFRGNK) are cytoplasmic.

The protein belongs to the SCAMP family.

It localises to the cell membrane. The protein resides in the cytoplasmic vesicle. The protein localises to the secretory vesicle membrane. Probably involved in membrane trafficking. In Arabidopsis thaliana (Mouse-ear cress), this protein is Secretory carrier-associated membrane protein 4 (SCAMP4).